Consider the following 696-residue polypeptide: Spindle assembly checkpoint component MAD1 (696 aa).

Disordered regions lie at residues 1-22 (MSTG…SINN) and 394-415 (QIHA…TENK). Basic and acidic residues predominate over residues 402-413 (KQQEQEKEENTE).

This sequence belongs to the MAD1 family. In terms of assembly, component of the mitotic checkpoint complex (MCC).

The protein resides in the nucleus. Functionally, central component of the spindle assembly checkpoint which is a feedback control that prevents cells with incompletely assembled spindles from leaving mitosis. The sequence is that of Spindle assembly checkpoint component MAD1 from Candida albicans (strain SC5314 / ATCC MYA-2876) (Yeast).